A 192-amino-acid chain; its full sequence is dTTP/UTP pyrophosphatase (192 aa).

The active-site Proton acceptor is Asp-72.

This sequence belongs to the Maf family. YhdE subfamily. A divalent metal cation serves as cofactor.

It is found in the cytoplasm. It catalyses the reaction dTTP + H2O = dTMP + diphosphate + H(+). The catalysed reaction is UTP + H2O = UMP + diphosphate + H(+). Its function is as follows. Nucleoside triphosphate pyrophosphatase that hydrolyzes dTTP and UTP. May have a dual role in cell division arrest and in preventing the incorporation of modified nucleotides into cellular nucleic acids. The protein is dTTP/UTP pyrophosphatase of Geobacter metallireducens (strain ATCC 53774 / DSM 7210 / GS-15).